The chain runs to 152 residues: Snaclec agkisacutacin subunit A (152 aa).

The signal sequence occupies residues 1 to 23 (MGRFIFVSFGLLVVFLSLSGTAA). In terms of domain architecture, C-type lectin spans 24–152 (DCSSGWSSYE…EQQDPFVCEA (129 aa)). 3 disulfide bridges follow: Cys25–Cys36, Cys53–Cys150, and Cys125–Cys142. Ser64, Glu66, and Glu70 together coordinate Ca(2+). Glu151 contacts Ca(2+).

The protein belongs to the snaclec family. As to quaternary structure, heterodimer with subunit B of AaACP or agkisacutacin; disulfide-linked. Expressed by the venom gland.

It is found in the secreted. Its function is as follows. Anticoagulant protein which binds to the gamma-carboxyglutamic acid-domain regions of factors IX (F9) and factor X (F10) in the presence of calcium with a 1 to 1 stoichiometry. Also inhibits platelet aggregation by binding to platelet glycoprotein Ibalpha (GP1BA) and functioning as a blocker of von Willebrand factor (VWF). Is devoid of hemorrhagic and lethal activities. Possesses antithrombotic and thrombolytic activities. Also hydrolyzes the Aalpha-chain of fibrinogen (FGA). Does not affect the Bbeta-chain (FGB) and the gamma chain (FGG). This is Snaclec agkisacutacin subunit A from Deinagkistrodon acutus (Hundred-pace snake).